Here is a 339-residue protein sequence, read N- to C-terminus: Dihydroorotate dehydrogenase (quinone) (339 aa).

FMN-binding positions include 62-66 (AGMDK) and Thr86. A substrate-binding site is contributed by Lys66. 111-115 (NRMGF) serves as a coordination point for substrate. Asn139 and Asn172 together coordinate FMN. Position 172 (Asn172) interacts with substrate. The active-site Nucleophile is Ser175. Substrate is bound at residue Asn177. Residues Lys217 and Thr245 each coordinate FMN. Position 246 to 247 (246 to 247 (NT)) interacts with substrate. FMN contacts are provided by residues Gly268, Gly297, and 318–319 (YS).

This sequence belongs to the dihydroorotate dehydrogenase family. Type 2 subfamily. In terms of assembly, monomer. The cofactor is FMN.

The protein localises to the cell membrane. The enzyme catalyses (S)-dihydroorotate + a quinone = orotate + a quinol. It participates in pyrimidine metabolism; UMP biosynthesis via de novo pathway; orotate from (S)-dihydroorotate (quinone route): step 1/1. Catalyzes the conversion of dihydroorotate to orotate with quinone as electron acceptor. The chain is Dihydroorotate dehydrogenase (quinone) from Shewanella baltica (strain OS185).